The sequence spans 934 residues: Serine/threonine-protein kinase PknD (934 aa).

One can recognise a Protein kinase domain in the interval 4 to 296 (YELIRLIGRG…ELRKALQPHL (293 aa)). Residues 10-18 (IGRGGMGEV) and Lys-33 each bind ATP. Residue Asp-138 is the Proton acceptor of the active site.

The protein belongs to the protein kinase superfamily. Ser/Thr protein kinase family. In terms of processing, autophosphorylated on serine and threonine residues.

It catalyses the reaction L-seryl-[protein] + ATP = O-phospho-L-seryl-[protein] + ADP + H(+). The catalysed reaction is L-threonyl-[protein] + ATP = O-phospho-L-threonyl-[protein] + ADP + H(+). Together with the serine/threonine kinase Pkn1, may play a role in the specific interactions with host proteins during intracellular growth. The sequence is that of Serine/threonine-protein kinase PknD from Chlamydia muridarum (strain MoPn / Nigg).